The primary structure comprises 184 residues: MSEDKLQKLQDSGLVDWAVFSEIVTMDEDEEGFSKSLVEVFVSQVEETFEEIDKYLKEKNLEKLSSSGHFLKGSAAALGLTKISNQCERIQNYGHKINFDNFQLEDIKTKGDSAVSAENVAVNDGETNPENGSNGNETSNNKTNTSNIPDESSDDFWIALIEDALAKARDGFDQSRRALDEYYE.

Positions 30 to 125 (EEGFSKSLVE…SAENVAVNDG (96 aa)) constitute an HPt domain. His-69 carries the phosphohistidine modification. The interval 120–152 (VAVNDGETNPENGSNGNETSNNKTNTSNIPDES) is disordered. Over residues 125–147 (GETNPENGSNGNETSNNKTNTSN) the composition is skewed to low complexity.

It belongs to the YPD1 family.

It is found in the cytoplasm. The protein resides in the nucleus. Functionally, phosphorelay intermediate protein that is part of the bifurcated SLN1-YPD1-SKN7/SSK1 two-component regulatory system, which controls activity of the HOG1 pathway and gene expression in response to oxidative stress and probably to changes in the osmolarity of the extracellular environment. Catalyzes the phosphoryl group transfer from the membrane-bound histidine kinase SLN1 to two distinct response regulators SSK1 and SKN7. The sequence is that of Phosphorelay intermediate protein YPD1 (YPD1) from Candida albicans (strain SC5314 / ATCC MYA-2876) (Yeast).